We begin with the raw amino-acid sequence, 181 residues long: MSVLSVYHESRPEQPLKVLTHLEDIAATLAEVGVQLERWDASAPVAAGASQEDVIAAYRPQIDRLMAERGYVTVDVISVSRDHPQKDELRAKFLDEHRHAEDEVRFFVAGRGLFTLHIEDMVYAVLCEKNDLISVPAGTRHWFDMGEQPSFVAIRLFNNPDGWTAQFTGERIADQFPRLDD.

Residues His-97, His-99, Glu-103, and His-141 each coordinate Fe(2+). Positions 97, 99, 103, and 141 each coordinate Ni(2+).

Belongs to the acireductone dioxygenase (ARD) family. In terms of assembly, monomer. It depends on Fe(2+) as a cofactor. Ni(2+) serves as cofactor.

The enzyme catalyses 1,2-dihydroxy-5-(methylsulfanyl)pent-1-en-3-one + O2 = 3-(methylsulfanyl)propanoate + CO + formate + 2 H(+). It catalyses the reaction 1,2-dihydroxy-5-(methylsulfanyl)pent-1-en-3-one + O2 = 4-methylsulfanyl-2-oxobutanoate + formate + 2 H(+). It functions in the pathway amino-acid biosynthesis; L-methionine biosynthesis via salvage pathway; L-methionine from S-methyl-5-thio-alpha-D-ribose 1-phosphate: step 5/6. Its function is as follows. Catalyzes 2 different reactions between oxygen and the acireductone 1,2-dihydroxy-3-keto-5-methylthiopentene (DHK-MTPene) depending upon the metal bound in the active site. Fe-containing acireductone dioxygenase (Fe-ARD) produces formate and 2-keto-4-methylthiobutyrate (KMTB), the alpha-ketoacid precursor of methionine in the methionine recycle pathway. Ni-containing acireductone dioxygenase (Ni-ARD) produces methylthiopropionate, carbon monoxide and formate, and does not lie on the methionine recycle pathway. The chain is Acireductone dioxygenase from Stutzerimonas stutzeri (strain A1501) (Pseudomonas stutzeri).